We begin with the raw amino-acid sequence, 111 residues long: Protein IDA-LIKE 5 (111 aa).

Residues 1-27 (MGNKRIKAMMILVVMIMMVFSWRICEA) form the signal peptide. The span at 46–56 (RRPNPRNHHHQ) shows a compositional bias: basic residues. The tract at residues 46–65 (RRPNPRNHHHQNQGFNGDDY) is disordered.

In terms of tissue distribution, expressed mainly in flowers. Lower levels in buds and seedlings. Detected in vascular tissues and in hydathodes.

It is found in the secreted. The protein resides in the extracellular space. Its function is as follows. May be involved in floral abscission. In Arabidopsis thaliana (Mouse-ear cress), this protein is Protein IDA-LIKE 5 (IDL5).